Here is a 225-residue protein sequence, read N- to C-terminus: Large ribosomal subunit protein uL1 (225 aa).

It belongs to the universal ribosomal protein uL1 family. As to quaternary structure, part of the 50S ribosomal subunit.

In terms of biological role, binds directly to 23S rRNA. The L1 stalk is quite mobile in the ribosome, and is involved in E site tRNA release. Protein L1 is also a translational repressor protein, it controls the translation of the L11 operon by binding to its mRNA. This Rhodopirellula baltica (strain DSM 10527 / NCIMB 13988 / SH1) protein is Large ribosomal subunit protein uL1.